Here is a 352-residue protein sequence, read N- to C-terminus: Ion-translocating oxidoreductase complex subunit D (352 aa).

Transmembrane regions (helical) follow at residues 20–40 (IMLL…WFFG), 42–62 (GTLV…ALVL), 89–109 (IPPL…VIIA), and 123–143 (PAMI…TSWL). At Thr187 the chain carries FMN phosphoryl threonine. Transmembrane regions (helical) follow at residues 214–234 (ILAG…GVWL), 242–262 (WHVP…GWLF), 267–287 (LAAP…FFIL), 301–321 (LIFG…GGYP), and 322–342 (DGVA…DYYT).

This sequence belongs to the NqrB/RnfD family. In terms of assembly, the complex is composed of six subunits: RsxA, RsxB, RsxC, RsxD, RsxE and RsxG. It depends on FMN as a cofactor.

The protein localises to the cell inner membrane. In terms of biological role, part of a membrane-bound complex that couples electron transfer with translocation of ions across the membrane. Required to maintain the reduced state of SoxR. This chain is Ion-translocating oxidoreductase complex subunit D, found in Escherichia coli (strain UTI89 / UPEC).